Here is a 307-residue protein sequence, read N- to C-terminus: UPF0282 protein PH1002 (307 aa).

The protein belongs to the UPF0282 family.

The polypeptide is UPF0282 protein PH1002 (Pyrococcus horikoshii (strain ATCC 700860 / DSM 12428 / JCM 9974 / NBRC 100139 / OT-3)).